Consider the following 208-residue polypeptide: Large ribosomal subunit protein uL4 (208 aa).

Residues 46 to 84 form a disordered region; it reads QGTHKAKTRAEVRGGGRKPFRQKGTGNARQGSTRSPLMI. The span at 69–80 shows a compositional bias: polar residues; it reads GTGNARQGSTRS.

This sequence belongs to the universal ribosomal protein uL4 family. As to quaternary structure, part of the 50S ribosomal subunit.

Its function is as follows. One of the primary rRNA binding proteins, this protein initially binds near the 5'-end of the 23S rRNA. It is important during the early stages of 50S assembly. It makes multiple contacts with different domains of the 23S rRNA in the assembled 50S subunit and ribosome. Functionally, forms part of the polypeptide exit tunnel. The protein is Large ribosomal subunit protein uL4 of Chlorobium limicola (strain DSM 245 / NBRC 103803 / 6330).